The sequence spans 79 residues: Small ribosomal subunit protein bS18 (79 aa).

This sequence belongs to the bacterial ribosomal protein bS18 family. As to quaternary structure, part of the 30S ribosomal subunit. Forms a tight heterodimer with protein bS6.

Functionally, binds as a heterodimer with protein bS6 to the central domain of the 16S rRNA, where it helps stabilize the platform of the 30S subunit. This chain is Small ribosomal subunit protein bS18, found in Aster yellows witches'-broom phytoplasma (strain AYWB).